The sequence spans 612 residues: Zinc metalloproteinase-disintegrin-like 2a (612 aa).

Residues 1–20 (MIQVLLVTICLAVFPYQGSS) form the signal peptide. The propeptide occupies 21 to 189 (IILGSGNVND…KKASQLNLTP (169 aa)). The Peptidase M12B domain occupies 199-395 (KYIELVIVAD…NRPPCILNKP (197 aa)). A Ca(2+)-binding site is contributed by Glu-202. The N-linked (GlcNAc...) asparagine glycan is linked to Asn-218. Asp-286 lines the Ca(2+) pocket. 3 cysteine pairs are disulfide-bonded: Cys-310-Cys-390, Cys-350-Cys-374, and Cys-352-Cys-357. His-335 lines the Zn(2+) pocket. Glu-336 is a catalytic residue. 2 residues coordinate Zn(2+): His-339 and His-345. Cys-390, Asn-393, Val-405, Asn-408, Phe-410, Glu-412, Glu-415, and Asp-418 together coordinate Ca(2+). The region spanning 403-489 (PPVCGNYFVE…DCPTDNFQRN (87 aa)) is the Disintegrin domain. 14 cysteine pairs are disulfide-bonded: Cys-406–Cys-435, Cys-417–Cys-430, Cys-419–Cys-425, Cys-429–Cys-452, Cys-443–Cys-449, Cys-448–Cys-474, Cys-461–Cys-481, Cys-468–Cys-500, Cys-493–Cys-505, Cys-512–Cys-562, Cys-527–Cys-573, Cys-540–Cys-550, Cys-557–Cys-599, and Cys-593–Cys-605. Positions 467 to 469 (ECD) match the D/ECD-tripeptide motif.

This sequence belongs to the venom metalloproteinase (M12B) family. P-III subfamily. The cofactor is Zn(2+). As to expression, expressed by the venom gland.

The protein localises to the secreted. Snake venom metalloproteinase that impairs hemostasis in the envenomed animal. This Crotalus adamanteus (Eastern diamondback rattlesnake) protein is Zinc metalloproteinase-disintegrin-like 2a.